The primary structure comprises 502 residues: Probable malate:quinone oxidoreductase (502 aa).

Belongs to the MQO family. It depends on FAD as a cofactor.

The catalysed reaction is (S)-malate + a quinone = a quinol + oxaloacetate. It functions in the pathway carbohydrate metabolism; tricarboxylic acid cycle; oxaloacetate from (S)-malate (quinone route): step 1/1. This is Probable malate:quinone oxidoreductase from Oceanobacillus iheyensis (strain DSM 14371 / CIP 107618 / JCM 11309 / KCTC 3954 / HTE831).